We begin with the raw amino-acid sequence, 1176 residues long: Surface-layer 125 kDa protein (1176 aa).

Residues 1-30 form the signal peptide; sequence MAKQNKGRKFFAASATAALVASAIVPVASA. SLH domains follow at residues 31–88, 89–152, and 153–216; these read AQLN…LEAE, GDVN…DLSE, and FADA…PKVD.

It localises to the secreted. The protein localises to the cell wall. It is found in the S-layer. Its function is as follows. The S-layer is a paracrystalline mono-layered assembly of proteins which coat the surface of bacteria. The polypeptide is Surface-layer 125 kDa protein (Lysinibacillus sphaericus (Bacillus sphaericus)).